The sequence spans 546 residues: EH domain-containing protein 2 (546 aa).

2 consecutive EF-hand domains span residues 15–50 (EHQKIYKEWFNIADSDGDGRVSGNDATKFFAMSKLS) and 51–84 (RQELKQVWAVADSKRQGFLGLSEFITAMKLVSLA). The 79-residue stretch at 16–94 (HQKIYKEWFN…QEGHEITSDL (79 aa)) folds into the EH domain. D28, D30, D32, R34, D39, D62, and E73 together coordinate Ca(2+). The region spanning 194 to 430 (FDAKPMVMLL…LLADLMDVPK (237 aa)) is the Dynamin-type G domain. The tract at residues 204 to 211 (GQYSTGKT) is G1 motif. A GTP-binding site is contributed by 204–211 (GQYSTGKT). Positions 230–231 (EP) are G2 motif. A G3 motif region spans residues 292–295 (DTPG). GTP-binding positions include 292-296 (DTPGV) and K359. A G4 motif region spans residues 358–361 (NKAD). V382 is a region of interest (G5 motif). 395–398 (SFND) is a GTP binding site. Residues 429–436 (PKKACDRK) carry the Nuclear localization signal motif. A coiled-coil region spans residues 467–490 (KSKAQQRLMDNLEEEFGKVQREFH).

Belongs to the TRAFAC class dynamin-like GTPase superfamily. Dynamin/Fzo/YdjA family. EHD subfamily. As to quaternary structure, homooligomer, and heterooligomer with EHD1. Interacts with AP-4 complex subunit sigma (At2g19790).

Its subcellular location is the endosome membrane. It localises to the cell membrane. It is found in the nucleus. The protein localises to the cytoplasm. It catalyses the reaction GTP + H2O = GDP + phosphate + H(+). Involved in endocytosis negative regulation, probably by influencing actin organization. Acts in early endocytic membrane fusion and membrane trafficking of recycling endosomes. Exhibits an inhibitory effect on endocytosis when over-expressed. The chain is EH domain-containing protein 2 from Arabidopsis thaliana (Mouse-ear cress).